The following is a 393-amino-acid chain: Protein TsgA (393 aa).

The next 12 membrane-spanning stretches (helical) occupy residues 11 to 31 (WISFLSYALTGALVIVTGMVM), 51 to 71 (FLNAGILISIFLNAWLMEIVP), 78 to 98 (FGFILMVLAVAGLMFSHSLAL), 101 to 121 (AAMFVLGLVSGITMSIGTFLI), 134 to 154 (LLFTDSFFSMAGMIFPMVAAF), 162 to 182 (WYWVYACIGLVYLAIFILTFG), 206 to 226 (IGVLFLAVAALCYILGQLGFI), 245 to 265 (ALVSDFWMSYMFGMWAFSFIL), 273 to 293 (ILTVLAGMAAVLMYLFITGTQ), 298 to 318 (WFILTLGFFSSAIYTSIITLG), 332 to 352 (FILTCGTIGTMLTFVVTGPIV), and 361 to 381 (LLTANGLYAVVFVMCFALGFV).

The protein belongs to the major facilitator superfamily. TsgA family.

It localises to the cell inner membrane. The chain is Protein TsgA from Salmonella dublin (strain CT_02021853).